A 464-amino-acid chain; its full sequence is Argininosuccinate lyase (464 aa).

This sequence belongs to the lyase 1 family. Argininosuccinate lyase subfamily.

It is found in the cytoplasm. The enzyme catalyses 2-(N(omega)-L-arginino)succinate = fumarate + L-arginine. Its pathway is amino-acid biosynthesis; L-arginine biosynthesis; L-arginine from L-ornithine and carbamoyl phosphate: step 3/3. This Pseudomonas aeruginosa (strain UCBPP-PA14) protein is Argininosuccinate lyase.